Here is a 408-residue protein sequence, read N- to C-terminus: Phosphoglycerate kinase (408 aa).

Substrate is bound by residues 24–26, Arg40, 63–66, Arg120, and Arg160; these read DIN and HQGR. ATP-binding positions include Glu331 and 357–360; that span reads GGHM.

It belongs to the phosphoglycerate kinase family.

It is found in the cytoplasm. The enzyme catalyses (2R)-3-phosphoglycerate + ATP = (2R)-3-phospho-glyceroyl phosphate + ADP. It functions in the pathway carbohydrate degradation; glycolysis; pyruvate from D-glyceraldehyde 3-phosphate: step 2/5. This Saccharolobus solfataricus (strain ATCC 35092 / DSM 1617 / JCM 11322 / P2) (Sulfolobus solfataricus) protein is Phosphoglycerate kinase (pgk).